The primary structure comprises 425 residues: Histone-binding protein RBBP4-A (425 aa).

Ala-2 is modified (N-acetylalanine). WD repeat units lie at residues 32 to 125 (YDLV…THDG), 126 to 175 (EVNR…RLRG), 176 to 223 (HQKE…KTIF), 225 to 270 (GHTA…HSVD), 271 to 314 (AHTA…HSFE), 315 to 371 (SHKD…FIHG), and 372 to 404 (GHTA…VWQM).

The protein belongs to the WD repeat RBAP46/RBAP48/MSI1 family. In terms of assembly, binds directly to histone H4, probably via helix 1 of the histone fold, a region that is not accessible when histone H4 is in chromatin. Probably forms a large corepressor complex that contains ncor1, sin3a, hdac1-A and/or hdac1-B, hdac2, rbbp4-A and/or rbbp4-B and possibly rbbp7.

It is found in the nucleus. Its subcellular location is the chromosome. The protein resides in the telomere. Functionally, core histone-binding subunit that may target chromatin assembly factors, chromatin remodeling factors and histone deacetylases to their histone substrates in a manner that is regulated by nucleosomal DNA. Component of several complexes which regulate chromatin metabolism. This is Histone-binding protein RBBP4-A (rbbp4-a) from Xenopus laevis (African clawed frog).